The primary structure comprises 375 residues: 4-hydroxy-3-methylbut-2-en-1-yl diphosphate synthase (flavodoxin) (375 aa).

Residues C268, C271, C303, and E310 each contribute to the [4Fe-4S] cluster site.

It belongs to the IspG family. [4Fe-4S] cluster serves as cofactor.

The catalysed reaction is (2E)-4-hydroxy-3-methylbut-2-enyl diphosphate + oxidized [flavodoxin] + H2O + 2 H(+) = 2-C-methyl-D-erythritol 2,4-cyclic diphosphate + reduced [flavodoxin]. It participates in isoprenoid biosynthesis; isopentenyl diphosphate biosynthesis via DXP pathway; isopentenyl diphosphate from 1-deoxy-D-xylulose 5-phosphate: step 5/6. Its function is as follows. Converts 2C-methyl-D-erythritol 2,4-cyclodiphosphate (ME-2,4cPP) into 1-hydroxy-2-methyl-2-(E)-butenyl 4-diphosphate. This is 4-hydroxy-3-methylbut-2-en-1-yl diphosphate synthase (flavodoxin) from Bacillus velezensis (strain DSM 23117 / BGSC 10A6 / LMG 26770 / FZB42) (Bacillus amyloliquefaciens subsp. plantarum).